Here is a 331-residue protein sequence, read N- to C-terminus: Ketol-acid reductoisomerase (NADP(+)) (331 aa).

Residues 2 to 182 enclose the KARI N-terminal Rossmann domain; the sequence is ARMYYDQDAN…GGTRAGILET (181 aa). Residues 25–28, Ser51, Ser53, and 83–86 each bind NADP(+); these read YGSQ and DEVQ. His108 is an active-site residue. Gly134 serves as a coordination point for NADP(+). Residues 183–328 form the KARI C-terminal knotted domain; it reads TFREETETDL…KDLRAMFSWL (146 aa). Mg(2+) contacts are provided by Asp191, Glu195, Glu227, and Glu231. Ser252 is a substrate binding site.

The protein belongs to the ketol-acid reductoisomerase family. In terms of assembly, homooctamer. The cofactor is Mg(2+).

It carries out the reaction (2R)-2,3-dihydroxy-3-methylbutanoate + NADP(+) = (2S)-2-acetolactate + NADPH + H(+). The catalysed reaction is (2R,3R)-2,3-dihydroxy-3-methylpentanoate + NADP(+) = (S)-2-ethyl-2-hydroxy-3-oxobutanoate + NADPH + H(+). The protein operates within amino-acid biosynthesis; L-isoleucine biosynthesis; L-isoleucine from 2-oxobutanoate: step 2/4. It functions in the pathway amino-acid biosynthesis; L-valine biosynthesis; L-valine from pyruvate: step 2/4. Involved in the biosynthesis of branched-chain amino acids (BCAA). Catalyzes an alkyl-migration followed by a ketol-acid reduction of (S)-2-acetolactate (S2AL) to yield (R)-2,3-dihydroxy-isovalerate. In the isomerase reaction, S2AL is rearranged via a Mg-dependent methyl migration to produce 3-hydroxy-3-methyl-2-ketobutyrate (HMKB). In the reductase reaction, this 2-ketoacid undergoes a metal-dependent reduction by NADPH to yield (R)-2,3-dihydroxy-isovalerate. The polypeptide is Ketol-acid reductoisomerase (NADP(+)) (Synechocystis sp. (strain ATCC 27184 / PCC 6803 / Kazusa)).